The sequence spans 873 residues: E3 ubiquitin-protein ligase UPL5 (873 aa).

Residues 1–19 (MTLSRSSADDSTNNANRSY) are compositionally biased toward polar residues. Disordered stretches follow at residues 1–37 (MTLSRSSADDSTNNANRSYSAVAGTDNKRKRDEDSSD) and 70–90 (RSGENSRSLSSSGECSSSNRP). One can recognise a Ubiquitin-like domain in the interval 95–171 (LQIFVRMMSG…LQLVARMQST (77 aa)). One can recognise a C-type lectin domain in the interval 272–296 (CLPIVLEFCKLLRKVCPDQKLYVTC). Residues 532-873 (SPEALHGGLF…DHVSSSFGKW (342 aa)) enclose the HECT domain. C839 acts as the Glycyl thioester intermediate in catalysis.

This sequence belongs to the UPL family. Interacts with WRKY53.

The protein localises to the cytoplasm. It carries out the reaction S-ubiquitinyl-[E2 ubiquitin-conjugating enzyme]-L-cysteine + [acceptor protein]-L-lysine = [E2 ubiquitin-conjugating enzyme]-L-cysteine + N(6)-ubiquitinyl-[acceptor protein]-L-lysine.. It functions in the pathway protein modification; protein ubiquitination. E3 ubiquitin protein ligase that regulates leaf senescence through ubiquitination and subsequent degradation of WRKY53. The chain is E3 ubiquitin-protein ligase UPL5 (UPL5) from Arabidopsis thaliana (Mouse-ear cress).